Reading from the N-terminus, the 397-residue chain is Ubiquitin-like modifier-activating enzyme 5 (397 aa).

ATP contacts are provided by Gly76, Asp97, Lys120, Asn143, and Asn177. Residues Cys219 and Cys222 each coordinate Zn(2+). The active-site Glycyl thioester intermediate is Cys243. Zn(2+) contacts are provided by Cys296 and Cys301. The interval 362–384 is disordered; sequence LAYEPPASTKHSETTSTTAVSDD. Residues 375-384 are compositionally biased toward low complexity; the sequence is TTSTTAVSDD.

The protein belongs to the ubiquitin-activating E1 family. UBA5 subfamily.

Its function is as follows. E1-like enzyme which activates UFM1. The polypeptide is Ubiquitin-like modifier-activating enzyme 5 (Aedes aegypti (Yellowfever mosquito)).